The sequence spans 218 residues: Peptide methionine sulfoxide reductase A2 (218 aa).

Positions 1–19 (MDSSLKTQEPQVVETSPSP) are enriched in polar residues. The interval 1–30 (MDSSLKTQEPQVVETSPSPVAQEPPQVADK) is disordered. The residue at position 205 (Ser205) is a Phosphoserine.

The protein belongs to the MsrA Met sulfoxide reductase family.

Its subcellular location is the cytoplasm. The protein localises to the cytosol. The enzyme catalyses L-methionyl-[protein] + [thioredoxin]-disulfide + H2O = L-methionyl-(S)-S-oxide-[protein] + [thioredoxin]-dithiol. It carries out the reaction [thioredoxin]-disulfide + L-methionine + H2O = L-methionine (S)-S-oxide + [thioredoxin]-dithiol. With respect to regulation, activated during dark in short day conditions. Catalyzes the reduction of methionine sulfoxide (MetSO) to methionine in proteins. Plays a protective role against oxidative stress by restoring activity to proteins that have been inactivated by methionine oxidation. Prevents cellular oxidative damage in long nights. MSRA family specifically reduces the MetSO S-enantiomer. The sequence is that of Peptide methionine sulfoxide reductase A2 (MRSA2) from Arabidopsis thaliana (Mouse-ear cress).